We begin with the raw amino-acid sequence, 135 residues long: Thioredoxin H5 (135 aa).

The Thioredoxin domain maps to 13-128; the sequence is EHLDYSGGNV…LQEKFEQLNR (116 aa). Residues cysteine 54 and cysteine 57 each act as nucleophile in the active site. A disulfide bridge links cysteine 54 with cysteine 57.

This sequence belongs to the thioredoxin family. Plant H-type subfamily.

Its subcellular location is the cytoplasm. Probable thiol-disulfide oxidoreductase that may be involved in the redox regulation of a number of cytosolic enzymes. This chain is Thioredoxin H5, found in Oryza sativa subsp. japonica (Rice).